The chain runs to 220 residues: Imidazoleglycerol-phosphate dehydratase (220 aa).

It belongs to the imidazoleglycerol-phosphate dehydratase family.

The catalysed reaction is D-erythro-1-(imidazol-4-yl)glycerol 3-phosphate = 3-(imidazol-4-yl)-2-oxopropyl phosphate + H2O. Its pathway is amino-acid biosynthesis; L-histidine biosynthesis; L-histidine from 5-phospho-alpha-D-ribose 1-diphosphate: step 6/9. The sequence is that of Imidazoleglycerol-phosphate dehydratase (HIS3) from Eremothecium gossypii (strain ATCC 10895 / CBS 109.51 / FGSC 9923 / NRRL Y-1056) (Yeast).